The chain runs to 507 residues: ATP synthase subunit alpha, chloroplastic (507 aa).

170 to 177 (GDRQTGKT) serves as a coordination point for ATP.

It belongs to the ATPase alpha/beta chains family. F-type ATPases have 2 components, CF(1) - the catalytic core - and CF(0) - the membrane proton channel. CF(1) has five subunits: alpha(3), beta(3), gamma(1), delta(1), epsilon(1). CF(0) has four main subunits: a, b, b' and c.

The protein resides in the plastid. It localises to the chloroplast thylakoid membrane. The catalysed reaction is ATP + H2O + 4 H(+)(in) = ADP + phosphate + 5 H(+)(out). In terms of biological role, produces ATP from ADP in the presence of a proton gradient across the membrane. The alpha chain is a regulatory subunit. The sequence is that of ATP synthase subunit alpha, chloroplastic from Silene latifolia (White campion).